Reading from the N-terminus, the 247-residue chain is 14-3-3 protein gamma (247 aa).

Methionine 1 is subject to N-acetylmethionine. Residue valine 2 is modified to N-acetylvaline; in 14-3-3 protein gamma, N-terminally processed. Residues 2–247 (VDREQLVQKA…QDDDGGEGNN (246 aa)) are interaction with SPATA18/MIEAP. Serine 71 is subject to Phosphoserine. Residue tyrosine 133 is modified to Phosphotyrosine. Phosphothreonine is present on threonine 145. Serine 215 is subject to Phosphoserine. Threonine 234 carries the post-translational modification Phosphothreonine. Position 235 is a phosphoserine (serine 235).

This sequence belongs to the 14-3-3 family. Homodimer. Part of a complex that contains DSG3, PKP1, YAP1 and YWHAG; the complex is required for localization of DSG3 and YAP1 to the cell membrane in keratinocytes. Interacts with SAMSN1. Interacts with RAF1, SSH1 and CRTC2/TORC2. Interacts with ABL1 (phosphorylated form); the interaction retains it in the cytoplasm. Interacts with GAB2. Interacts with MDM4 (phosphorylated); negatively regulates MDM4 activity toward TP53. Interacts with PKA-phosphorylated AANAT and SIRT2. Interacts with the 'Thr-369' phosphorylated form of DAPK2. Interacts with PI4KB, TBC1D22A and TBC1D22B. Interacts with SLITRK1. Interacts with LRRK2; this interaction is dependent on LRRK2 phosphorylation. Interacts with MARK2 and MARK3. Interacts with MEFV. Interacts with ENDOG, TSC2 and PIK3C3; interaction with ENDOG weakens its interaction with TSC2 and PIK3C3. Interacts with (phosphorylated) WDR24. Interacts with BEST1; this interaction promotes L-glutamate channel activity leading to the positive regulation of NMDA glutamate receptor activity through the L-glutamate secretion. Interacts with PKP1 (when phosphorylated); the interaction results in translocation of PKP1 to the cytoplasm and loss of intercellular adhesion in keratinocytes. Interacts with SPATA18/MIEAP; a protein that also plays a role in MALM. Post-translationally, phosphorylated by various PKC isozymes.

The protein resides in the cytoplasm. It is found in the cytosol. The protein localises to the mitochondrion matrix. In terms of biological role, adapter protein implicated in the regulation of a large spectrum of both general and specialized signaling pathways. Binds to a large number of partners, usually by recognition of a phosphoserine or phosphothreonine motif. Binding generally results in the modulation of the activity of the binding partner. Promotes inactivation of WDR24 component of the GATOR2 complex by binding to phosphorylated WDR24. Participates in the positive regulation of NMDA glutamate receptor activity by promoting the L-glutamate secretion through interaction with BEST1. Reduces keratinocyte intercellular adhesion, via interacting with PKP1 and sequestering it in the cytoplasm, thereby reducing its incorporation into desmosomes. Plays a role in mitochondrial protein catabolic process (also named MALM) that promotes the degradation of damaged proteins inside mitochondria. This Bos taurus (Bovine) protein is 14-3-3 protein gamma.